Here is a 3343-residue protein sequence, read N- to C-terminus: Cadherin-3 (3343 aa).

An N-terminal signal peptide occupies residues 1–26 (MTIRIFFSIFLLNHLIFFHLFNFTHQ). Asn22 carries an N-linked (GlcNAc...) asparagine glycan. The Extracellular segment spans residues 27–3228 (FSEETIKFSV…LFSNFSNTTT (3202 aa)). 3 Cadherin domains span residues 28–117 (SEET…SPIF), 118–229 (PIDV…PPNF), and 242–330 (PNTK…EPNI). Residues Asn149, Asn250, Asn288, Asn369, Asn467, and Asn612 are each glycosylated (N-linked (GlcNAc...) asparagine). The Cadherin 4 domain maps to 632-738 (ICQITEIHVL…EDVNDNVPKF (107 aa)). N-linked (GlcNAc...) asparagine glycosylation is found at Asn752, Asn806, Asn941, Asn966, Asn970, Asn985, Asn1042, Asn1335, Asn1425, Asn1429, Asn1557, Asn1563, Asn1597, Asn1624, Asn1695, and Asn1702. The 90-residue stretch at 1279–1368 (RENELMFEIE…ADVNDNKPKI (90 aa)) folds into the Cadherin 5 domain. Cadherin domains are found at residues 1545-1648 (DKAA…APRF), 1676-1756 (AEDL…TPEF), and 1757-1857 (ELSS…HPMI). N-linked (GlcNAc...) asparagine glycosylation is found at Asn1895 and Asn1900. 3 Cadherin domains span residues 1954-2045 (TVSV…SPRF), 2046-2145 (DQQL…NAPR), and 2146-2245 (FSRI…APIF). N-linked (GlcNAc...) asparagine glycans are attached at residues Asn2053, Asn2129, Asn2203, Asn2382, Asn2391, Asn2410, Asn2414, Asn2431, Asn2527, Asn2530, Asn2564, Asn2621, Asn2665, Asn2712, Asn2798, Asn2809, Asn2927, Asn2976, and Asn3045. The Laminin G-like domain maps to 3040–3205 (EISVRNGTSH…SSTGTSRNEC (166 aa)). Cys3172 and Cys3205 are joined by a disulfide. 2 N-linked (GlcNAc...) asparagine glycosylation sites follow: Asn3222 and Asn3225. The chain crosses the membrane as a helical span at residues 3229–3250 (LILLITLALISLIGFSVCLLAI). Topologically, residues 3251–3343 (RRRWRQKSPG…RDGHINMAYL (93 aa)) are cytoplasmic. Positions 3257 to 3277 (KSPGDQKQTERSNGWTGHVMP) are disordered.

Expressed in the anchor cell.

It localises to the cell membrane. The protein localises to the basolateral cell membrane. Its subcellular location is the cell junction. In terms of biological role, cell adhesion protein involved in the control of epithelial morphogenesis. Together with metalloproteinase zmp-1 and hemicentin him-4, plays a role in anchor cell (AC) invasion during postembryonic vulval development. This chain is Cadherin-3 (cdh-3), found in Caenorhabditis elegans.